The sequence spans 396 residues: NADH-quinone oxidoreductase subunit D (396 aa).

This sequence belongs to the complex I 49 kDa subunit family. NDH-1 is composed of 14 different subunits. Subunits NuoB, C, D, E, F, and G constitute the peripheral sector of the complex.

The protein resides in the cell inner membrane. The enzyme catalyses a quinone + NADH + 5 H(+)(in) = a quinol + NAD(+) + 4 H(+)(out). In terms of biological role, NDH-1 shuttles electrons from NADH, via FMN and iron-sulfur (Fe-S) centers, to quinones in the respiratory chain. The immediate electron acceptor for the enzyme in this species is believed to be ubiquinone. Couples the redox reaction to proton translocation (for every two electrons transferred, four hydrogen ions are translocated across the cytoplasmic membrane), and thus conserves the redox energy in a proton gradient. The sequence is that of NADH-quinone oxidoreductase subunit D from Rhizobium johnstonii (strain DSM 114642 / LMG 32736 / 3841) (Rhizobium leguminosarum bv. viciae).